Reading from the N-terminus, the 94-residue chain is Large ribosomal subunit protein uL23 (94 aa).

This sequence belongs to the universal ribosomal protein uL23 family. In terms of assembly, part of the 50S ribosomal subunit. Contacts protein L29, and trigger factor when it is bound to the ribosome.

In terms of biological role, one of the early assembly proteins it binds 23S rRNA. One of the proteins that surrounds the polypeptide exit tunnel on the outside of the ribosome. Forms the main docking site for trigger factor binding to the ribosome. The protein is Large ribosomal subunit protein uL23 of Listeria monocytogenes serotype 4b (strain CLIP80459).